The chain runs to 443 residues: Probable protein S-acyltransferase 7 (443 aa).

A run of 2 helical transmembrane segments spans residues 44 to 64 and 76 to 96; these read SLAL…IFVA and GVSI…LLLL. One can recognise a DHHC domain in the interval 149-199; the sequence is KYCDTCMLYRPPRCSHCSICNNCVERFDHHCPWVGQCIGMRNYRFFFMFVF. Cys-179 functions as the S-palmitoyl cysteine intermediate in the catalytic mechanism. 2 consecutive transmembrane segments (helical) span residues 193 to 213 and 237 to 257; these read FFFM…AFCW and SIVL…LTVF. Phosphoserine is present on residues Ser-327 and Ser-377. Residues 382–392 are compositionally biased toward basic and acidic residues; the sequence is ATVDEQSDRPS. The segment at 382–443 is disordered; it reads ATVDEQSDRP…SGLVTENRPT (62 aa). Phosphoserine is present on Ser-406.

It belongs to the DHHC palmitoyltransferase family.

The protein localises to the cell membrane. It catalyses the reaction L-cysteinyl-[protein] + hexadecanoyl-CoA = S-hexadecanoyl-L-cysteinyl-[protein] + CoA. Its function is as follows. Palmitoyl acyltransferase. The sequence is that of Probable protein S-acyltransferase 7 (PAT07) from Arabidopsis thaliana (Mouse-ear cress).